The chain runs to 539 residues: Chaperonin GroEL (539 aa).

Residues 29–32 (TIGP), 86–90 (DGTTT), Gly413, 476–478 (NAA), and Asp492 each bind ATP.

This sequence belongs to the chaperonin (HSP60) family. In terms of assembly, forms a cylinder of 14 subunits composed of two heptameric rings stacked back-to-back. Interacts with the co-chaperonin GroES.

It localises to the cytoplasm. It catalyses the reaction ATP + H2O + a folded polypeptide = ADP + phosphate + an unfolded polypeptide.. Its function is as follows. Together with its co-chaperonin GroES, plays an essential role in assisting protein folding. The GroEL-GroES system forms a nano-cage that allows encapsulation of the non-native substrate proteins and provides a physical environment optimized to promote and accelerate protein folding. This chain is Chaperonin GroEL, found in Staphylococcus epidermidis (strain ATCC 12228 / FDA PCI 1200).